The chain runs to 316 residues: C-type lectin domain family 10 member A (316 aa).

The Cytoplasmic portion of the chain corresponds to Met-1–Cys-39. The short motif at Tyr-5 to Phe-8 is the Endocytosis signal element. The helical; Signal-anchor for type II membrane protein transmembrane segment at His-40 to Phe-60 threads the bilayer. Residues Gln-61–His-316 lie on the Extracellular side of the membrane. Residues Asn-78 and Asn-173 are each glycosylated (N-linked (GlcNAc...) asparagine). The stretch at Ala-85 to Thr-176 forms a coiled coil. 3 disulfides stabilise this stretch: Cys-181/Cys-192, Cys-209/Cys-304, and Cys-282/Cys-296. The region spanning His-188–Glu-305 is the C-type lectin domain. The Ca(2+) site is built by Val-218, Asn-220, Glu-224, and Asp-243. The a glycoprotein site is built by Gln-267 and Asp-269. Ca(2+) contacts are provided by Asp-269, Asp-270, Glu-280, and Asp-281. An a glycoprotein-binding site is contributed by Glu-280. A glycoprotein contacts are provided by His-286 and Asn-292. The Ca(2+) site is built by Asn-292, Asp-293, and Glu-305.

In terms of assembly, interacts with A-, B- and C-domain containing PTPRC/CD45 isoforms: isoform 1/CD45ABC, isoform 3/CD45AB, isoform 5/CD45BC and isoform 7/CD45B. Does not interact with PTPRC/CD45 isoform 2/CD45RO, a memory T cell marker. Expressed in myeloid antigen presenting cells in lymph nodes and skin (at protein level). Expressed in dermal dendritic cells (at protein level).

The protein resides in the cell membrane. It is found in the early endosome membrane. The protein localises to the lysosome membrane. Functionally, C-type lectin receptor involved in recognition of N-acetylgalactosamine (GalNAc)-terminated glycans by myeloid antigen presenting cells (APCs). Binds in a Ca(2+)-dependent manner to alpha- and beta-linked GalNAc residues on glycoprotein and glycolipid antigens, including alphaGalNAc- and Galbeta1-&gt;3GalNAc-O-Ser/Thr also known as Tn and T antigens, LacdiNAc epitope GalNAcbeta1-&gt;4GlcNAc and its derivative GalNAcbeta1-&gt;4-(Fucalpha1-&gt;3)GlcNAc, O-linked core 5 and 6 glycans, and GM2 and GD2 gangliosides. Acts as a signaling receptor at the interface of APC-T cell interactions. On immature dendritic cells, recognizes Tn antigen-carrying PTPRC/CD45 receptor on effector T cells and downregulates PTRPN/CD45 phosphatase activity with an impact on T cell activation threshold, cytokine production and proliferation. Modulates dendritic cell maturation toward a tolerogenic phenotype leading to generation of regulatory CD4-positive T cell subset with immune suppressive functions. Acts as an endocytic pattern recognition receptor involved in antitumor immunity. During tumorigenesis, recognizes Tn antigens and its sialylated forms Neu5Ac-Tn and Neu5Gc-Tn expressed on tumor cell mucins. On immature dendritic cells, can internalize Tn-terminated immunogens and target them to endolysosomal compartment for MHC class I and II antigen presentation to CD8-positive and CD4-positive T cells, respectively. The chain is C-type lectin domain family 10 member A from Homo sapiens (Human).